The sequence spans 606 residues: KH domain-containing protein At4g18375 (606 aa).

A compositionally biased stretch (basic residues) spans Met1 to Ile10. Residues Met1–Ser26 form a disordered region. 5 KH domains span residues Leu35 to Thr99, Asn138 to Val210, Glu311 to Val380, Asn394 to Ile455, and Ser535 to Val599.

Its subcellular location is the nucleus. This chain is KH domain-containing protein At4g18375, found in Arabidopsis thaliana (Mouse-ear cress).